The following is a 580-amino-acid chain: Double-stranded RNA-binding protein Staufen homolog 1 (580 aa).

Ser2 is modified (N-acetylserine). Positions 34-44 (SIPSTTSSLPS) are enriched in polar residues. Positions 34–59 (SIPSTTSSLPSENAGRPIQNSALPSA) are disordered. Residues 72 to 162 (TPTVELNALC…AAKALRTLQS (91 aa)) enclose the DRBM 1 domain. Arg108 bears the Asymmetric dimethylarginine mark. Asymmetric dimethylarginine; alternate is present on Arg115. Arg115 carries the post-translational modification Omega-N-methylarginine; alternate. A disordered region spans residues 158-189 (RTLQSEPLPERPEGRRPGEQVNGRESEEENLN). Residues 165–182 (LPERPEGRRPGEQVNGRE) are compositionally biased toward basic and acidic residues. Ser183 bears the Phosphoserine mark. In terms of domain architecture, DRBM 2 spans 191 to 258 (SEISQVFEIA…AIAVLEELKK (68 aa)). Ser285 bears the Phosphoserine mark. The region spanning 293–361 (NPISRLAQIQ…AENMLEILGF (69 aa)) is the DRBM 3 domain. A disordered region spans residues 367–404 (QPTKPALKSEEKTPIKKPGDGRKVTFFEPGSGDENGTS). Residues 373 to 391 (LKSEEKTPIKKPGDGRKVT) are compositionally biased toward basic and acidic residues. Ser397 is subject to Phosphoserine.

In terms of assembly, binds tubulin. Binds with low affinity single-stranded RNA or DNA homopolymers. Interacts with CASC3 in an RNA-dependent manner. Identified in a mRNP complex, at least composed of DHX9, DDX3X, ELAVL1, HNRNPU, IGF2BP1, ILF3, PABPC1, PCBP2, PTBP2, STAU1, STAU2, SYNCRIP and YBX1. Interacts with the influenza virus nonstructural protein NS1.

Its subcellular location is the cytoplasm. The protein resides in the rough endoplasmic reticulum. Its function is as follows. Binds double-stranded RNA (regardless of the sequence) and tubulin. May play a role in specific positioning of mRNAs at given sites in the cell by cross-linking cytoskeletal and RNA components, and in stimulating their translation at the site. This is Double-stranded RNA-binding protein Staufen homolog 1 (STAU1) from Ailuropoda melanoleuca (Giant panda).